We begin with the raw amino-acid sequence, 248 residues long: Probable transcriptional regulatory protein PsycPRwf_1013 (248 aa).

This sequence belongs to the TACO1 family.

It is found in the cytoplasm. In Psychrobacter sp. (strain PRwf-1), this protein is Probable transcriptional regulatory protein PsycPRwf_1013.